The chain runs to 83 residues: UPF0512 protein W (83 aa).

The protein belongs to the UPF0512 family.

This Dictyostelium discoideum (Social amoeba) protein is UPF0512 protein W.